Consider the following 248-residue polypeptide: 5'-nucleotidase SurE (248 aa).

4 residues coordinate a divalent metal cation: Asp-8, Asp-9, Ser-39, and Asn-91.

It belongs to the SurE nucleotidase family. The cofactor is a divalent metal cation.

It is found in the cytoplasm. It catalyses the reaction a ribonucleoside 5'-phosphate + H2O = a ribonucleoside + phosphate. Nucleotidase that shows phosphatase activity on nucleoside 5'-monophosphates. The sequence is that of 5'-nucleotidase SurE from Neisseria meningitidis serogroup C (strain 053442).